The sequence spans 149 residues: Calmodulin (149 aa).

Ala-2 bears the N-acetylalanine mark. 4 EF-hand domains span residues 8–43, 44–79, 81–116, and 117–149; these read EQIAEFKEAFSLFDKDGDGTITTKELGTVMRSLGQN, PTEAELQDMINEVDADGDGTIDFPEFLTMMARKMKD, DSEEEIREAFRVFDKDGNGFISAAELRHVMTNLGEK, and LTDEEVDEMIREADIDGDGQVNYEEFVTMMTSK. Positions 21, 23, 25, 27, 32, 57, 59, 61, 63, 68, 94, 96, 98, and 105 each coordinate Ca(2+). Lys-116 bears the N6,N6,N6-trimethyllysine mark. The Ca(2+) site is built by Asp-130, Asp-132, Asp-134, Gln-136, and Glu-141.

This sequence belongs to the calmodulin family.

Its function is as follows. Calmodulin mediates the control of a large number of enzymes, ion channels and other proteins by Ca(2+). Among the enzymes to be stimulated by the calmodulin-Ca(2+) complex are a number of protein kinases and phosphatases. The protein is Calmodulin of Pyuridae sp. (Sea squirt).